Here is a 211-residue protein sequence, read N- to C-terminus: Uracil phosphoribosyltransferase (211 aa).

Residues arginine 78, arginine 103, and 130 to 138 (DPMLATGGT) each bind 5-phospho-alpha-D-ribose 1-diphosphate. Residues isoleucine 195 and 200-202 (GDA) contribute to the uracil site. Aspartate 201 lines the 5-phospho-alpha-D-ribose 1-diphosphate pocket.

This sequence belongs to the UPRTase family. The cofactor is Mg(2+).

The catalysed reaction is UMP + diphosphate = 5-phospho-alpha-D-ribose 1-diphosphate + uracil. The protein operates within pyrimidine metabolism; UMP biosynthesis via salvage pathway; UMP from uracil: step 1/1. Allosterically activated by GTP. Its function is as follows. Catalyzes the conversion of uracil and 5-phospho-alpha-D-ribose 1-diphosphate (PRPP) to UMP and diphosphate. This Streptomyces coelicolor (strain ATCC BAA-471 / A3(2) / M145) protein is Uracil phosphoribosyltransferase.